The chain runs to 524 residues: Chromosomal replication initiator protein DnaA (524 aa).

Positions 1–85 (MSQNSSSLLE…TRVLSLRMGR (85 aa)) are domain I, interacts with DnaA modulators. Residues 85 to 182 (RSFSLAVSVE…TPAHNPNREV (98 aa)) form a domain II region. The segment at 95 to 183 (PEQEIPETPA…PAHNPNREVS (89 aa)) is disordered. Residues 148-158 (APEPHPAPIAD) show a composition bias toward pro residues. Residues 183 to 399 (SLNPKYTFES…GALIRVSAYS (217 aa)) form a domain III, AAA+ region region. Gly-227, Gly-229, Lys-230, and Thr-231 together coordinate ATP. A domain IV, binds dsDNA region spans residues 400-524 (SLINQPIDKE…TQLIKSRGRN (125 aa)).

The protein belongs to the DnaA family. Oligomerizes as a right-handed, spiral filament on DNA at oriC.

It localises to the cytoplasm. Plays an essential role in the initiation and regulation of chromosomal replication. ATP-DnaA binds to the origin of replication (oriC) to initiate formation of the DNA replication initiation complex once per cell cycle. Binds the DnaA box (a 9 base pair repeat at the origin) and separates the double-stranded (ds)DNA. Forms a right-handed helical filament on oriC DNA; dsDNA binds to the exterior of the filament while single-stranded (ss)DNA is stabiized in the filament's interior. The ATP-DnaA-oriC complex binds and stabilizes one strand of the AT-rich DNA unwinding element (DUE), permitting loading of DNA polymerase. After initiation quickly degrades to an ADP-DnaA complex that is not apt for DNA replication. Binds acidic phospholipids. This is Chromosomal replication initiator protein DnaA from Corynebacterium glutamicum (strain ATCC 13032 / DSM 20300 / JCM 1318 / BCRC 11384 / CCUG 27702 / LMG 3730 / NBRC 12168 / NCIMB 10025 / NRRL B-2784 / 534).